The primary structure comprises 64 residues: Large ribosomal subunit protein bL32 (64 aa).

Positions 1–64 are disordered; that stretch reads MAVQQNRKTR…APKHGDETEE (64 aa). Over residues 7 to 16 the composition is skewed to basic residues; it reads RKTRSKRGMR.

Belongs to the bacterial ribosomal protein bL32 family.

The chain is Large ribosomal subunit protein bL32 from Methylococcus capsulatus (strain ATCC 33009 / NCIMB 11132 / Bath).